The following is a 449-amino-acid chain: Adenylosuccinate synthetase isozyme 1 B (449 aa).

GTP is bound by residues 34–40 (GDEGKGK) and 62–64 (GHT). The Proton acceptor role is filled by Asp-35. Mg(2+) contacts are provided by Asp-35 and Gly-62. Asp-35 contributes to the substrate binding site. Residues 35 to 38 (DEGK), 60 to 63 (NAGH), Thr-155, Arg-169, Asn-248, Thr-263, and Arg-327 contribute to the IMP site. His-63 serves as the catalytic Proton donor. 323-329 (VTTGRKR) lines the substrate pocket. Residues Arg-329, 355–357 (KLD), and 437–440 (GVGK) each bind GTP.

The protein belongs to the adenylosuccinate synthetase family. In terms of assembly, homodimer. Mg(2+) serves as cofactor.

It is found in the cytoplasm. The enzyme catalyses IMP + L-aspartate + GTP = N(6)-(1,2-dicarboxyethyl)-AMP + GDP + phosphate + 2 H(+). It functions in the pathway purine metabolism; AMP biosynthesis via de novo pathway; AMP from IMP: step 1/2. In terms of biological role, component of the purine nucleotide cycle (PNC), which interconverts IMP and AMP to regulate the nucleotide levels in various tissues, and which contributes to glycolysis and ammoniagenesis. Catalyzes the first committed step in the biosynthesis of AMP from IMP. The chain is Adenylosuccinate synthetase isozyme 1 B (adss1b) from Salmo salar (Atlantic salmon).